The following is a 637-amino-acid chain: uncharacterized protein (637 aa).

A DNA-binding region (zn(2)-C6 fungal-type) is located at residues 7 to 34 (CDLCRLKKIKCSRGQPRCQTCTLFQADC). The C2H2-type; degenerate zinc-finger motif lies at 304-327 (SLCRTLCGQACLMAQQLNLHRKQS).

It localises to the nucleus. This is an uncharacterized protein from Schizosaccharomyces pombe (strain 972 / ATCC 24843) (Fission yeast).